A 542-amino-acid chain; its full sequence is MAELDQLPDESSSAKALVSLKEGSLSNTWNEKYSSLQKTPVWKGRNTSPAVEMPFRNSKRSRLFSDEDDRQINTRSPKRNQRVAMVPQKFTATMSTPDKKASQKIGFRLRNLLKLPKAHKWCIYEWFYSNIDKPLFEGDNDFCVCLKESFPNLKTRKLTRVEWGKIRRLMGKPRRCSSAFFEEERSALKQKRQKIRLLQQRKVADVSQFKDLPDEIPLPLVIGTKVTARLRGVHDGLFTGQIDAVDTLNATYRVTFDRTGLGTHTIPDYEVLSNEPHETMPIAAFGQKQRPSRFFMTPPRLHYTPPLQSPIMDNDPLLGQSPWRSKISGSDTETLGGFPVEFLIQVTRLSKILMIKKEHIKKLREMNTDAEKLKSYSMPISIEFQRRYATIVLELEQLNKDLNKVLHKVQQYCYELAPDQGLQPADQPTDMRRRCEEEAQEIVRHANSSTGQPCVENENLTDLISRLTAILLQIKCLAEGGDLNSFEFKSLTDSLNDIKSTIDASNISCFQNNVEIHVAHIQSGLSQMGNLHAFAANNTNRD.

Ala2 bears the N-acetylalanine mark. Residues 2–296 (AELDQLPDES…QKQRPSRFFM (295 aa)) form a sufficient for interaction with RB1 region. Residue Lys21 forms a Glycyl lysine isopeptide (Lys-Gly) (interchain with G-Cter in SUMO2) linkage. A phosphoserine mark is found at Ser65 and Ser95. Residues Thr96 and Thr304 each carry the phosphothreonine modification. Ser309 and Ser321 each carry phosphoserine. Positions 355 to 413 (IKKEHIKKLREMNTDAEKLKSYSMPISIEFQRRYATIVLELEQLNKDLNKVLHKVQQYC) form a coiled coil.

Belongs to the lin-9 family. Component of the DREAM complex (also named LINC complex) at least composed of E2F4, E2F5, LIN9, LIN37, LIN52, LIN54, MYBL1, MYBL2, RBL1, RBL2, RBBP4, TFDP1 and TFDP2. The complex exists in quiescent cells where it represses cell cycle-dependent genes. It dissociates in S phase when LIN9, LIN37, LIN52 and LIN54 form a subcomplex that binds to MYBL2. Interacts with RB1.

The protein resides in the nucleus. The protein localises to the nucleoplasm. Its function is as follows. Acts as a tumor suppressor. Inhibits DNA synthesis. Its ability to inhibit oncogenic transformation is mediated through its association with RB1. Plays a role in the expression of genes required for the G1/S transition. This is Protein lin-9 homolog (LIN9) from Macaca fascicularis (Crab-eating macaque).